Here is a 279-residue protein sequence, read N- to C-terminus: NADPH-dependent 7-cyano-7-deazaguanine reductase (279 aa).

86–88 contacts substrate; sequence IES. 88 to 89 serves as a coordination point for NADPH; the sequence is SK. The active-site Thioimide intermediate is the C187. Residue D194 is the Proton donor of the active site. Residue 226–227 coordinates substrate; the sequence is HE. An NADPH-binding site is contributed by 255–256; it reads RG.

This sequence belongs to the GTP cyclohydrolase I family. QueF type 2 subfamily. In terms of assembly, homodimer.

It is found in the cytoplasm. The catalysed reaction is 7-aminomethyl-7-carbaguanine + 2 NADP(+) = 7-cyano-7-deazaguanine + 2 NADPH + 3 H(+). Its pathway is tRNA modification; tRNA-queuosine biosynthesis. In terms of biological role, catalyzes the NADPH-dependent reduction of 7-cyano-7-deazaguanine (preQ0) to 7-aminomethyl-7-deazaguanine (preQ1). This Haemophilus influenzae (strain ATCC 51907 / DSM 11121 / KW20 / Rd) protein is NADPH-dependent 7-cyano-7-deazaguanine reductase.